We begin with the raw amino-acid sequence, 228 residues long: 7-cyano-7-deazaguanine synthase (228 aa).

8–18 (LSGGLDSTTCL) serves as a coordination point for ATP. The Zn(2+) site is built by cysteine 188, cysteine 198, cysteine 201, and cysteine 204.

It belongs to the QueC family. It depends on Zn(2+) as a cofactor.

The catalysed reaction is 7-carboxy-7-deazaguanine + NH4(+) + ATP = 7-cyano-7-deazaguanine + ADP + phosphate + H2O + H(+). It functions in the pathway purine metabolism; 7-cyano-7-deazaguanine biosynthesis. Functionally, catalyzes the ATP-dependent conversion of 7-carboxy-7-deazaguanine (CDG) to 7-cyano-7-deazaguanine (preQ(0)). This is 7-cyano-7-deazaguanine synthase from Legionella pneumophila (strain Corby).